A 672-amino-acid polypeptide reads, in one-letter code: Poly-beta-1,6-N-acetyl-D-glucosamine N-deacetylase (672 aa).

The first 20 residues, 1 to 20 (MLRNGNKYLLMLVSIIMLTA), serve as a signal peptide directing secretion. A lipid anchor (N-palmitoyl cysteine) is attached at Cys-21. Cys-21 carries S-diacylglycerol cysteine lipidation. The region spanning 107–349 (KAVVLTFDDG…IQRVKDMQIS (243 aa)) is the NodB homology domain.

Belongs to the polysaccharide deacetylase family.

Its subcellular location is the cell outer membrane. Its function is as follows. Catalyzes the N-deacetylation of poly-beta-1,6-N-acetyl-D-glucosamine (PGA), a biofilm adhesin polysaccharide. N-deacetylation promotes PGA export through the PgaA porin. The sequence is that of Poly-beta-1,6-N-acetyl-D-glucosamine N-deacetylase (pgaB) from Escherichia coli O157:H7.